Reading from the N-terminus, the 354-residue chain is Uroporphyrinogen decarboxylase (354 aa).

Residues 27-31, Asp-77, Tyr-154, Thr-209, and His-327 each bind substrate; that span reads RQAGR.

It belongs to the uroporphyrinogen decarboxylase family. In terms of assembly, homodimer.

The protein localises to the cytoplasm. The enzyme catalyses uroporphyrinogen III + 4 H(+) = coproporphyrinogen III + 4 CO2. It participates in porphyrin-containing compound metabolism; protoporphyrin-IX biosynthesis; coproporphyrinogen-III from 5-aminolevulinate: step 4/4. Its function is as follows. Catalyzes the decarboxylation of four acetate groups of uroporphyrinogen-III to yield coproporphyrinogen-III. The polypeptide is Uroporphyrinogen decarboxylase (Edwardsiella ictaluri (strain 93-146)).